The chain runs to 332 residues: Aquaporin Lacbi1:317173 (332 aa).

A compositionally biased stretch (polar residues) spans 1–20; the sequence is MSGQHQITEQSSRNPLSRVS. A disordered region spans residues 1–45; that stretch reads MSGQHQITEQSSRNPLSRVSTLLPEKPLSPTSTYAGTQKHPEAPR. Residues 1–66 are Cytoplasmic-facing; it reads MSGQHQITEQ…RNAIRKPMAE (66 aa). A helical transmembrane segment spans residues 67–87; that stretch reads FFGVALLIIFGAGSACQVVLS. Residues 88-100 are Extracellular-facing; the sequence is TNPDVASSARGSF. A helical transmembrane segment spans residues 101-121; that stretch reads LSINFGWAIGIAMGVWVSGGI. Topologically, residues 122-144 are cytoplasmic; the sequence is SGGHINPAITIAMATYRGFPWRK. The NPA 1 signature appears at 127–129; it reads NPA. The chain crosses the membrane as a helical span at residues 145–165; it reads VPSYILAQVLGGVVGAGLVYA. Residues 166–199 are Extracellular-facing; the sequence is NYIHAIDIFEGGHHIRTQATASLFATYALPYMTQ. The chain crosses the membrane as a helical span at residues 200 to 220; the sequence is ASCFFSEFLATAVLSMMVFAL. Topologically, residues 221 to 230 are cytoplasmic; sequence TDKRNHSPTN. The helical transmembrane segment at 231–251 threads the bilayer; that stretch reads GLLPFALFILFVGLGASLGME. The Extracellular portion of the chain corresponds to 252-283; sequence TAYALNPARDFGPRLFLAMAGYGKALFNYRSQ. The NPA 2 motif lies at 257-259; sequence NPA. Residues 284 to 304 traverse the membrane as a helical segment; the sequence is YWLWAPIIAPVLGAQAGGLLY. At 305–332 the chain is on the cytoplasmic side; sequence DTFLNDGDNSPIKWRCASSQEHQLAEVV.

This sequence belongs to the MIP/aquaporin (TC 1.A.8) family.

The protein resides in the membrane. It catalyses the reaction H2O(in) = H2O(out). The enzyme catalyses NH4(+)(in) = NH4(+)(out). In terms of biological role, water channel required to facilitate the transport of water across membranes. Acts as the most efficient Laccaria water channel. In addition to water, also shows strong ammonium transport activity. May be involved in fungal nitrogen (ammonium) support of the plant host in symbiosis. This chain is Aquaporin Lacbi1:317173, found in Laccaria bicolor (strain S238N-H82 / ATCC MYA-4686) (Bicoloured deceiver).